We begin with the raw amino-acid sequence, 545 residues long: Tripartite motif-containing 55 (545 aa).

The RING-type zinc finger occupies 26-82 (CPICLEMFTKPVVILPCQHNLCRKCASDIFQASNPYLPTRGGTTVASGGRFRCPSCR). The B box-type zinc finger occupies 119–161 (LDQPMCEEHEEERINIYCLNCEVPTCSLCKVFGAHKDCQVAPL). C124, H127, C147, and H153 together coordinate Zn(2+). The region spanning 269–327 (MDEPEMAVFLQNAKTLLQKIVEASKAFQMEKLEQGYEIMSNFTVNLNREEKIIREIDFS) is the COS domain. Disordered regions lie at residues 324–352 (IDFS…VEVE), 359–378 (IASS…SQLP), and 417–532 (SQQT…EPAR). Residues 328 to 352 (REEEEEEDAGEIDEEGEGEDAVEVE) show a composition bias toward acidic residues. The segment covering 417-428 (SQQTTQSETSGP) has biased composition (polar residues). Positions 474 to 485 (SSVQSAEVAEAA) are enriched in low complexity. Positions 486-506 (TNEQAAVSGKESSSTAATSQI) are enriched in polar residues.

Targeted for degradation through the proteasomal and lysosomal pathways in the presence of SUMO3. In terms of tissue distribution, widely expressed in various tissues, besides skeletal muscle and heart, such as brain, lung, liver, spleen and kidney.

Its subcellular location is the nucleus. The protein localises to the cytoplasm. The catalysed reaction is S-ubiquitinyl-[E2 ubiquitin-conjugating enzyme]-L-cysteine + [acceptor protein]-L-lysine = [E2 ubiquitin-conjugating enzyme]-L-cysteine + N(6)-ubiquitinyl-[acceptor protein]-L-lysine.. In terms of biological role, E3 ubiquitin ligase that plays an important role in regulating cardiac development and contractility, muscle growth, metabolism, and fiber-type differentiation. Acts as a critical factor that regulates cardiomyocyte size during development in concert with TRIM63 by regulating E2F1-mediated gene expression. Plays a role in apoptosis induction in cardiomyocytes by promoting ubiquitination of the DUSP1 phosphatase. Promotes non-canonical NF-kappa-B signaling and B-cell-mediated immune responses by mediating NFKB2 'Lys-48'-linked ubiquitination and processing. In turn, NFKB2 is further processed by valosin-containing protein/VCP, an ATPase that mediates ubiquitin-dependent protein degradation by the proteasome. May play a role in preventing macrophages from producing inflammatory factors and migrating by downregulating the level of nuclear NF-kappa-B subunit RELA. Modifies also PPARG via polyubiquitination and accelerates PPARG proteasomal degradation to inhibit its activity. The polypeptide is Tripartite motif-containing 55 (Trim55) (Mus musculus (Mouse)).